Here is a 182-residue protein sequence, read N- to C-terminus: Fimbrial subunit type 1 (182 aa).

Positions 1–23 are cleaved as a signal peptide; sequence MKIKTLAIVVLSALSLSSAAALA. Cysteines 44 and 84 form a disulfide.

It belongs to the fimbrial protein family.

It is found in the fimbrium. This is Fimbrial subunit type 1 from Klebsiella pneumoniae.